The chain runs to 899 residues: Putative lipoxygenase 5 (899 aa).

Disordered regions lie at residues A15 to A34, A48 to A68, and V258 to S291. The PLAT domain occupies A68–S204. Residues P207–I899 form the Lipoxygenase domain. Fe cation contacts are provided by H559, H564, H751, N755, and I899.

Belongs to the lipoxygenase family. Fe cation serves as cofactor.

It catalyses the reaction (9Z,12Z)-octadecadienoate + O2 = (13S)-hydroperoxy-(9Z,11E)-octadecadienoate. The catalysed reaction is (9Z,12Z,15Z)-octadecatrienoate + O2 = (13S)-hydroperoxy-(9Z,11E,15Z)-octadecatrienoate. It participates in lipid metabolism; oxylipin biosynthesis. Plant lipoxygenase may be involved in a number of diverse aspects of plant physiology including growth and development, pest resistance, and senescence or responses to wounding. Catalyzes the hydroperoxidation of lipids containing a cis,cis-1,4-pentadiene structure. This is Putative lipoxygenase 5 from Oryza sativa subsp. japonica (Rice).